We begin with the raw amino-acid sequence, 264 residues long: MICOS complex subunit MIC27 (264 aa).

The N-terminal 27 residues, 1–27, are a transit peptide targeting the mitochondrion; that stretch reads MAALRMGKLTTMPTGLIYASISVHVAK. At 28-110 the chain is on the mitochondrial intermembrane side; that stretch reads EEESKKQLVK…YVYLKNPPRD (83 aa). The chain crosses the membrane as a helical span at residues 111-129; that stretch reads FLPKIGVITVSGLAGFISA. The Mitochondrial matrix portion of the chain corresponds to 130–137; sequence RKGSRFKR. Residues 138–155 traverse the membrane as a helical segment; sequence IAYPLGLATLGATVCYPV. Residues 156-264 lie on the Mitochondrial intermembrane side of the membrane; that stretch reads QSVIIAKVAG…EDIDMYSTRS (109 aa). Positions 189-198 are enriched in basic and acidic residues; sequence KLPEHKEKTK. Residues 189 to 264 are disordered; that stretch reads KLPEHKEKTK…EDIDMYSTRS (76 aa). The segment covering 223-238 has biased composition (low complexity); that stretch reads AELSSETKTKSTSGAT. Residues 245 to 256 show a composition bias toward basic and acidic residues; that stretch reads KLMDHGQSHPED.

It belongs to the apolipoprotein O/MICOS complex subunit Mic27 family. As to quaternary structure, component of the mitochondrial contact site and cristae organizing system (MICOS) complex, composed of at least MICOS10/MIC10, CHCHD3/MIC19, CHCHD6/MIC25, APOOL/MIC27, IMMT/MIC60, APOO/MIC23/MIC26 and QIL1/MIC13. This complex was also known under the names MINOS or MitOS complex. The MICOS complex associates with mitochondrial outer membrane proteins SAMM50, MTX1 and MTX2 (together described as components of the mitochondrial outer membrane sorting assembly machinery (SAM) complex) and DNAJC11, mitochondrial inner membrane protein TMEM11 and with HSPA9. The MICOS and SAM complexes together with DNAJC11 are part of a large protein complex spanning both membranes termed the mitochondrial intermembrane space bridging (MIB) complex. Interacts with MICOS10/MIC10, IMMT/MIC60 and APOO/MIC23/MIC26.

It localises to the mitochondrion inner membrane. It is found in the mitochondrion. Its function is as follows. Component of the MICOS complex, a large protein complex of the mitochondrial inner membrane that plays crucial roles in the maintenance of crista junctions, inner membrane architecture, and formation of contact sites to the outer membrane. Specifically binds to cardiolipin (in vitro) but not to the precursor lipid phosphatidylglycerol. Plays a crucial role in crista junction formation and mitochondrial function. The chain is MICOS complex subunit MIC27 (APOL) from Bos taurus (Bovine).